Here is a 238-residue protein sequence, read N- to C-terminus: tRNA (guanine-N(7)-)-methyltransferase (238 aa).

S-adenosyl-L-methionine-binding residues include glutamate 70, aspartate 95, aspartate 122, and aspartate 145. Aspartate 145 is a catalytic residue. Residues lysine 149, aspartate 181, and 216–219 (TKFE) contribute to the substrate site.

This sequence belongs to the class I-like SAM-binding methyltransferase superfamily. TrmB family.

The enzyme catalyses guanosine(46) in tRNA + S-adenosyl-L-methionine = N(7)-methylguanosine(46) in tRNA + S-adenosyl-L-homocysteine. Its pathway is tRNA modification; N(7)-methylguanine-tRNA biosynthesis. In terms of biological role, catalyzes the formation of N(7)-methylguanine at position 46 (m7G46) in tRNA. The protein is tRNA (guanine-N(7)-)-methyltransferase of Neisseria meningitidis serogroup B (strain ATCC BAA-335 / MC58).